We begin with the raw amino-acid sequence, 2974 residues long: Mediator of RNA polymerase II transcription subunit 13 (2974 aa).

Composition is skewed to basic and acidic residues over residues 284–299, 340–367, 374–390, and 624–633; these read EKEPENVTEERQKTPE, MFEPDLRQDKPKEETAAEKEKRMAAREV, RREERRREMEKQRRADD, and SREKRKEYQP. Disordered stretches follow at residues 284–309, 340–394, 624–654, 677–749, 764–801, 1032–1063, 1099–1134, 1140–1159, 1281–1342, 1416–1486, 2052–2078, and 2247–2309; these read EKEPENVTEERQKTPEAEPPAPPQTT, MFEP…NLED, SREKRKEYQPYHRKRPAKSVKEKKKKAKRKV, FNAW…FADI, LYNPAGGDIEEGDETSNESPDEKTPEGSPNGSPRPKEE, PHGSFDHDSEPEFDEQRTGLGEGTSDQYQDGE, GMLSPPASNEMPKGGPLSVGPASIESQGLNQIYPTP, LQADASQAHSPSIGGKFRST, TLAR…TPTY, QGGL…DATA, ELKKADEHPAPPSTQSENSEGNAATPA, and QDEA…PAGM. Residues 351-396 adopt a coiled-coil conformation; that stretch reads KEETAAEKEKRMAAREVRRLRRQRREERRREMEKQRRADDNLEDYD. Composition is skewed to basic residues over residues 634 to 654 and 677 to 688; these read YHRKRPAKSVKEKKKKAKRKV and FNAWKQKKKGPP. The span at 689–717 shows a compositional bias: basic and acidic residues; it reads PKKDLAKKEAAADKDKDKDKEKDKEKDKD. A compositionally biased stretch (basic and acidic residues) spans 1035 to 1048; that stretch reads SFDHDSEPEFDEQR. 2 stretches are compositionally biased toward polar residues: residues 1122 to 1134 and 1140 to 1149; these read IESQGLNQIYPTP and LQADASQAHS. Pro residues-rich tracts occupy residues 1284 to 1299 and 1326 to 1340; these read RPPPGATSPLPPPTPM and PAYPPTPGPYPPTTP. The span at 1443-1464 shows a compositional bias: polar residues; sequence IRNTDAPNDPTVSKLQSAVSRN. Positions 1473–1486 are enriched in low complexity; that stretch reads AATSIPTATDDATA. Residues 2064 to 2073 are compositionally biased toward polar residues; it reads STQSENSEGN. Residues 2220-2301 are a coiled coil; sequence AVEGRLKRQK…EQYPAEESQA (82 aa). Composition is skewed to basic and acidic residues over residues 2247–2258 and 2281–2292; these read QDEADKREKMDE and EEKKRNKQKENE. Residues 2347 to 2974 are mediates transcriptional repression; the sequence is WKQRDTRVQN…LYHSVARLLV (628 aa).

The protein belongs to the Mediator complex subunit 13 family. As to quaternary structure, component of the Mediator complex.

The protein resides in the nucleus. Functionally, component of the Mediator complex, a coactivator involved in regulated gene transcription of nearly all RNA polymerase II-dependent genes. Mediator functions as a bridge to convey information from gene-specific regulatory proteins to the basal RNA polymerase II transcription machinery. Mediator is recruited to promoters by direct interactions with regulatory proteins and serves as a scaffold for the assembly of a functional preinitiation complex with RNA polymerase II and the general transcription factors. The protein is Mediator of RNA polymerase II transcription subunit 13 (let-19) of Caenorhabditis briggsae.